Consider the following 223-residue polypeptide: Cytidylate kinase (223 aa).

10-18 is an ATP binding site; sequence GPAGSGKSS.

This sequence belongs to the cytidylate kinase family. Type 1 subfamily.

Its subcellular location is the cytoplasm. The catalysed reaction is CMP + ATP = CDP + ADP. It carries out the reaction dCMP + ATP = dCDP + ADP. The protein is Cytidylate kinase of Pseudothermotoga lettingae (strain ATCC BAA-301 / DSM 14385 / NBRC 107922 / TMO) (Thermotoga lettingae).